Here is a 129-residue protein sequence, read N- to C-terminus: UPF0325 protein YE3288 (129 aa).

This sequence belongs to the UPF0325 family.

This is UPF0325 protein YE3288 from Yersinia enterocolitica serotype O:8 / biotype 1B (strain NCTC 13174 / 8081).